A 289-amino-acid chain; its full sequence is UPF0173 metal-dependent hydrolase H16_A2129 (289 aa).

It belongs to the UPF0173 family.

This is UPF0173 metal-dependent hydrolase H16_A2129 from Cupriavidus necator (strain ATCC 17699 / DSM 428 / KCTC 22496 / NCIMB 10442 / H16 / Stanier 337) (Ralstonia eutropha).